The chain runs to 179 residues: Bacterioferritin (179 aa).

Residues 1 to 150 (MAGNREDRKA…NIGSHIKNLG (150 aa)) form the Ferritin-like diiron domain. 2 residues coordinate Fe cation: Glu23 and Glu56. Met57 is a Fe-coproporphyrin III binding site. Fe cation-binding residues include His59, Glu99, Glu132, and His135.

It belongs to the bacterioferritin family. Homooligomer of 24 subunits, arranged as 12 dimers, that are packed together to form an approximately spherical molecule with a central cavity, in which large amounts of iron can be deposited. Fe-coproporphyrin III serves as cofactor. It depends on Fe cation as a cofactor.

The catalysed reaction is 4 Fe(2+) + O2 + 4 H(+) = 4 Fe(3+) + 2 H2O. It carries out the reaction Fe(2+)(in) = Fe(2+)(out). Functionally, iron-storage protein, whose ferroxidase center binds Fe(2+), oxidizes it using dioxygen to Fe(3+), and participates in the subsequent Fe(3+) oxide mineral core formation within the central cavity of the BFR protein shell. The chain is Bacterioferritin (bfr) from Desulfovibrio desulfuricans (strain ATCC 27774 / DSM 6949 / MB).